Reading from the N-terminus, the 177-residue chain is Large ribosomal subunit protein uL6 (177 aa).

It belongs to the universal ribosomal protein uL6 family. Part of the 50S ribosomal subunit.

Functionally, this protein binds to the 23S rRNA, and is important in its secondary structure. It is located near the subunit interface in the base of the L7/L12 stalk, and near the tRNA binding site of the peptidyltransferase center. This is Large ribosomal subunit protein uL6 from Methylobacterium nodulans (strain LMG 21967 / CNCM I-2342 / ORS 2060).